The primary structure comprises 44 residues: Phosphatase RapE inhibitor (44 aa).

2 consecutive propeptides follow at residues 1 to 30 (MKSK…MKEA) and 36 to 44 (LAPTHEFLV).

It belongs to the Phr family. Post-translationally, contains a predicted signal peptide cleavage site in the N-terminal region, however the propeptide is probably only subject to processing events at the ends of the mature peptide.

The protein resides in the secreted. Its subcellular location is the cytoplasm. Functionally, signaling molecule involved in the regulation of sporulation. Secreted during production, but the mature peptide acts intracellularly, indicating that it needs to be imported into the cell to function. Inhibitor of the RapE phosphatase activity. Does not inhibit the phosphatase activity of RapA and RapB. Probably plays a dispensable role in the overall context of sporulation initiation. This chain is Phosphatase RapE inhibitor (phrE), found in Bacillus subtilis (strain 168).